Consider the following 296-residue polypeptide: Indole-3-glycerol phosphate synthase (296 aa).

Belongs to the TrpC family.

It carries out the reaction 1-(2-carboxyphenylamino)-1-deoxy-D-ribulose 5-phosphate + H(+) = (1S,2R)-1-C-(indol-3-yl)glycerol 3-phosphate + CO2 + H2O. It functions in the pathway amino-acid biosynthesis; L-tryptophan biosynthesis; L-tryptophan from chorismate: step 4/5. In Microcystis aeruginosa (strain NIES-843 / IAM M-2473), this protein is Indole-3-glycerol phosphate synthase.